The following is a 148-amino-acid chain: Snaclec 7 (148 aa).

An N-terminal signal peptide occupies residues 1-23; it reads MGRFIFVSFGLLVVFLSLSGTGA. Disulfide bonds link cysteine 27–cysteine 38, cysteine 55–cysteine 144, and cysteine 121–cysteine 136. In terms of domain architecture, C-type lectin spans 34–145; sequence HERHCYKVIN…CSSTHPFVCK (112 aa).

It belongs to the snaclec family. As to quaternary structure, heterodimer; disulfide-linked. As to expression, expressed by the venom gland.

It localises to the secreted. Interferes with one step of hemostasis (modulation of platelet aggregation, or coagulation cascade, for example). This chain is Snaclec 7, found in Echis pyramidum leakeyi (Leakey's carpet viper).